Reading from the N-terminus, the 61-residue chain is MIMAELKIIQVRGTIGARWNQRESLRTLGLRKIRQSVVREDNAQTRGLIKTVHHLVVVEEV.

It belongs to the universal ribosomal protein uL30 family. In terms of assembly, part of the 50S ribosomal subunit.

This Mycobacterium sp. (strain KMS) protein is Large ribosomal subunit protein uL30.